A 66-amino-acid chain; its full sequence is Large ribosomal subunit protein bL33c (66 aa).

Belongs to the bacterial ribosomal protein bL33 family.

The protein resides in the plastid. It is found in the chloroplast. This Arabis hirsuta (Hairy rock-cress) protein is Large ribosomal subunit protein bL33c.